Reading from the N-terminus, the 118-residue chain is Ferredoxin-thioredoxin reductase, catalytic chain (118 aa).

Position 57 (Cys-57) interacts with [4Fe-4S] cluster. Catalysis depends on Cys-59, which acts as the Nucleophile. Cys-59 and Cys-89 form a disulfide bridge. Positions 76, 78, and 87 each coordinate [4Fe-4S] cluster.

It belongs to the ferredoxin thioredoxin reductase beta subunit family. In terms of assembly, heterodimer of subunit A (variable subunit) and subunit B (catalytic subunit). Heterodimeric FTR forms a complex with ferredoxin and thioredoxin. [4Fe-4S] cluster serves as cofactor.

Its subcellular location is the plastid. The protein localises to the chloroplast. The enzyme catalyses [thioredoxin]-disulfide + 2 reduced [2Fe-2S]-[ferredoxin] + 2 H(+) = [thioredoxin]-dithiol + 2 oxidized [2Fe-2S]-[ferredoxin]. Functionally, catalytic subunit of the ferredoxin-thioredoxin reductase (FTR), which catalyzes the two-electron reduction of thioredoxins by the electrons provided by reduced ferredoxin. The sequence is that of Ferredoxin-thioredoxin reductase, catalytic chain (ftrB) from Porphyra purpurea (Red seaweed).